The chain runs to 393 residues: MVAAAPSNKEPLPDMMTSIRLDQSGRVEIIDQLLLPHSVVWMPVSTPEEAFDAIKTMRIRGAPAIASLAALTLRSYLSSSSSPVSSSSSSSDVISWVGQTIDYLQSSRPTAVNLGEAMDRIRAALKDSEAQNQTAGDIIQRVKKICGDVHDEDLERNMKMGRLGAEWLWKKRGGGKKGLKVMTVCNTGSLATSGYGTAIGVITALFQEDHLDTAYYAQTTPYHQGSRLTSLELTTLQIPACMICDTMLGSLFQHEDIDGVIVGADRVVKNGDTANKIGTYQAAVLAQRHNVPFMVVAPVTTIDLSLPTGAEIHIEHRPAAEATQVRGLDTETGKLSVVRITPEGVGEGDKPWQRVYNPSFDVTPAELISAVVTEKGVAERKEGEKSIDVASIC.

The active-site Proton donor is Asp-265.

Belongs to the eIF-2B alpha/beta/delta subunits family. MtnA subfamily.

It localises to the cytoplasm. It is found in the nucleus. The enzyme catalyses 5-(methylsulfanyl)-alpha-D-ribose 1-phosphate = 5-(methylsulfanyl)-D-ribulose 1-phosphate. Its pathway is amino-acid biosynthesis; L-methionine biosynthesis via salvage pathway; L-methionine from S-methyl-5-thio-alpha-D-ribose 1-phosphate: step 1/6. Its function is as follows. Catalyzes the interconversion of methylthioribose-1-phosphate (MTR-1-P) into methylthioribulose-1-phosphate (MTRu-1-P). The polypeptide is Methylthioribose-1-phosphate isomerase (Cryptococcus neoformans var. neoformans serotype D (strain B-3501A) (Filobasidiella neoformans)).